The following is an 847-amino-acid chain: Protein HIR2 (847 aa).

5 WD repeats span residues 10–46 (LHDGQLTQCEVDDNKLYIIGGKYLSIWDSQTLLNAAT), 113–153 (KDNE…LKSS), 155–194 (ELKSKPISIITDPLGQLLTVILQNRSVQIYQYDSHGTTKL), 259–305 (KFSP…PLFD), and 309–348 (VVNSYITDLEWDNSGLGLFAISQDGQLVIFAFQENELGDV). The segment at 368-399 (PFKPKAEEPDTKLPPNKTAQQTTTNSKKQPKA) is disordered. The span at 384-394 (KTAQQTTTNSK) shows a compositional bias: polar residues. WD repeat units follow at residues 508-548 (RKDN…IYVT) and 558-597 (PMLLGVPVSFLEGSGDYLLCITSIGQMYCWNVNTGKIAFP).

It belongs to the WD repeat HIR1 family.

Its subcellular location is the nucleus. Functionally, required for replication-independent chromatin assembly and for the periodic repression of histone gene transcription during the cell cycle. This chain is Protein HIR2 (HIR2), found in Kluyveromyces lactis (strain ATCC 8585 / CBS 2359 / DSM 70799 / NBRC 1267 / NRRL Y-1140 / WM37) (Yeast).